Reading from the N-terminus, the 265-residue chain is Energy-coupling factor transporter transmembrane protein EcfT (265 aa).

A run of 6 helical transmembrane segments spans residues 26 to 46 (MVFV…QTYA), 47 to 67 (VGII…MFLF), 72 to 92 (PILF…KGGA), 107 to 127 (VIMG…TTIM), 152 to 172 (LPVH…PTLM), and 243 to 263 (HTYD…ILYL).

Belongs to the energy-coupling factor EcfT family. As to quaternary structure, forms a stable energy-coupling factor (ECF) transporter complex composed of 2 membrane-embedded substrate-binding proteins (S component), 2 ATP-binding proteins (A component) and 2 transmembrane proteins (T component). May be able to interact with more than 1 S component at a time.

The protein resides in the cell membrane. Functionally, transmembrane (T) component of an energy-coupling factor (ECF) ABC-transporter complex. Unlike classic ABC transporters this ECF transporter provides the energy necessary to transport a number of different substrates. This chain is Energy-coupling factor transporter transmembrane protein EcfT, found in Macrococcus caseolyticus (strain JCSC5402) (Macrococcoides caseolyticum).